Reading from the N-terminus, the 594-residue chain is Elongation factor 4 (594 aa).

In terms of domain architecture, tr-type G spans 2-184; it reads KNIRNFSIIA…TIVAKVPAPE (183 aa). GTP-binding positions include 14 to 19 and 131 to 134; these read DHGKST and NKID.

Belongs to the TRAFAC class translation factor GTPase superfamily. Classic translation factor GTPase family. LepA subfamily.

It is found in the cell inner membrane. The enzyme catalyses GTP + H2O = GDP + phosphate + H(+). Required for accurate and efficient protein synthesis under certain stress conditions. May act as a fidelity factor of the translation reaction, by catalyzing a one-codon backward translocation of tRNAs on improperly translocated ribosomes. Back-translocation proceeds from a post-translocation (POST) complex to a pre-translocation (PRE) complex, thus giving elongation factor G a second chance to translocate the tRNAs correctly. Binds to ribosomes in a GTP-dependent manner. The polypeptide is Elongation factor 4 (Francisella tularensis subsp. tularensis (strain WY96-3418)).